The following is a 203-amino-acid chain: Putative GPI-anchored protein YHR214W (203 aa).

The signal sequence occupies residues Met1–Gly23. N-linked (GlcNAc...) asparagine glycans are attached at residues Asn28 and Asn138. A lipid anchor (GPI-anchor amidated asparagine) is attached at Asn184. The propeptide at Ala185–Leu203 is removed in mature form.

The protein localises to the cell membrane. In Saccharomyces cerevisiae (strain ATCC 204508 / S288c) (Baker's yeast), this protein is Putative GPI-anchored protein YHR214W.